The sequence spans 274 residues: Large ribosomal subunit protein uL2 (274 aa).

Residues 223–258 (VAMNPVDHPHGGGEGRTSGGRHPVTPWGIPTKGYKT) form a disordered region.

It belongs to the universal ribosomal protein uL2 family. As to quaternary structure, part of the 50S ribosomal subunit. Forms a bridge to the 30S subunit in the 70S ribosome.

Its function is as follows. One of the primary rRNA binding proteins. Required for association of the 30S and 50S subunits to form the 70S ribosome, for tRNA binding and peptide bond formation. It has been suggested to have peptidyltransferase activity; this is somewhat controversial. Makes several contacts with the 16S rRNA in the 70S ribosome. The sequence is that of Large ribosomal subunit protein uL2 from Pelobacter propionicus (strain DSM 2379 / NBRC 103807 / OttBd1).